Here is a 435-residue protein sequence, read N- to C-terminus: Adenylosuccinate synthetase (435 aa).

Residues 11–17 and 39–41 contribute to the GTP site; these read GDEGKGK and GHT. The active-site Proton acceptor is the Asp-12. Residues Asp-12 and Gly-39 each contribute to the Mg(2+) site. Residues 12-15, 37-40, Thr-128, Arg-142, Gln-223, Thr-238, and Arg-302 each bind IMP; these read DEGK and NAGH. His-40 serves as the catalytic Proton donor. Residue 298 to 304 coordinates substrate; that stretch reads SVTGRPR. GTP is bound by residues Arg-304, 330-332, and 412-414; these read KLD and STG.

Belongs to the adenylosuccinate synthetase family. As to quaternary structure, homodimer. Mg(2+) serves as cofactor.

It is found in the cytoplasm. The catalysed reaction is IMP + L-aspartate + GTP = N(6)-(1,2-dicarboxyethyl)-AMP + GDP + phosphate + 2 H(+). It participates in purine metabolism; AMP biosynthesis via de novo pathway; AMP from IMP: step 1/2. Plays an important role in the de novo pathway of purine nucleotide biosynthesis. Catalyzes the first committed step in the biosynthesis of AMP from IMP. The protein is Adenylosuccinate synthetase of Coxiella burnetii (strain Dugway 5J108-111).